Consider the following 304-residue polypeptide: Type II restriction enzyme LlaDCHI (304 aa).

This sequence belongs to the DpnII type II restriction endonuclease family.

The catalysed reaction is Endonucleolytic cleavage of DNA to give specific double-stranded fragments with terminal 5'-phosphates.. In terms of biological role, a P subtype restriction enzyme that recognizes the double-stranded unmethylated sequence 5'-GATC-3' and cleaves before G-1. This is Type II restriction enzyme LlaDCHI (llaDCHIR) from Lactococcus lactis subsp. cremoris (Streptococcus cremoris).